The chain runs to 752 residues: Xanthine dehydrogenase molybdenum-binding subunit (752 aa).

4 residues coordinate Mo-molybdopterin: Gln206, Phe237, Arg350, and Ala516.

The protein belongs to the xanthine dehydrogenase family. In terms of assembly, heterotrimer of XdhA, XdhB and XdhC. It depends on Mo-molybdopterin as a cofactor.

It catalyses the reaction xanthine + NAD(+) + H2O = urate + NADH + H(+). The catalysed reaction is hypoxanthine + NAD(+) + H2O = xanthine + NADH + H(+). It participates in purine metabolism; hypoxanthine degradation; urate from hypoxanthine: step 1/2. It functions in the pathway purine metabolism; hypoxanthine degradation; urate from hypoxanthine: step 2/2. Its function is as follows. Presumed to be a dehydrogenase, but possibly an oxidase. Participates in limited purine salvage (requires aspartate) but does not support aerobic growth on purines as the sole carbon source (purine catabolism). This is Xanthine dehydrogenase molybdenum-binding subunit (xdhA) from Escherichia coli O157:H7.